Consider the following 209-residue polypeptide: Ubiquinone biosynthesis protein COQ4 homolog 2, mitochondrial (209 aa).

Zn(2+) contacts are provided by H118, D119, H122, and E134.

The protein belongs to the COQ4 family. Component of a multi-subunit COQ enzyme complex. Zn(2+) is required as a cofactor.

The protein resides in the mitochondrion inner membrane. The catalysed reaction is a 4-hydroxy-3-methoxy-5-(all-trans-polyprenyl)benzoate + H(+) = a 2-methoxy-6-(all-trans-polyprenyl)phenol + CO2. The protein operates within cofactor biosynthesis; ubiquinone biosynthesis. Functionally, lyase that catalyzes the C1-decarboxylation of 4-hydroxy-3-methoxy-5-(all-trans-polyprenyl)benzoic acid into 2-methoxy-6-(all-trans-polyprenyl)phenol during ubiquinone biosynthesis. The chain is Ubiquinone biosynthesis protein COQ4 homolog 2, mitochondrial from Paramecium tetraurelia.